We begin with the raw amino-acid sequence, 548 residues long: 4-coumarate--CoA ligase CCL1 (548 aa).

Residues 195–203 (SSGTTGLPK), 337–342 (QGYGMT), Asp-426, 438–441 (IVDR), and Lys-532 each bind ATP. Residues 268 to 337 (EISKLLELIE…EKLPHAKLGQ (70 aa)) are SBD1. The segment at 338-405 (GYGMTEAGPV…IRGKQIMKGY (68 aa)) is SBD2.

This sequence belongs to the ATP-dependent AMP-binding enzyme family. As to expression, mostly expressed in glandular trichomes (lupulin glands) after flowering, and, to a lower extent, in stems, leaves, cones and flowers.

The protein resides in the cytoplasm. It carries out the reaction (E)-4-coumarate + ATP + CoA = (E)-4-coumaroyl-CoA + AMP + diphosphate. The protein operates within secondary metabolite biosynthesis. In terms of biological role, involved in the biosynthesis of prenylated phenolics natural products which contribute to the bitter taste of beer and display broad biological activities. Catalyzes the ligation of CoA on (E)-4-coumarate to produce (E)-4-coumaroyl-CoA. The chain is 4-coumarate--CoA ligase CCL1 from Humulus lupulus (European hop).